The chain runs to 148 residues: D-aminoacyl-tRNA deacylase (148 aa).

Residues 137–138 (GP) carry the Gly-cisPro motif, important for rejection of L-amino acids motif.

Belongs to the DTD family. As to quaternary structure, homodimer.

The protein resides in the cytoplasm. The enzyme catalyses glycyl-tRNA(Ala) + H2O = tRNA(Ala) + glycine + H(+). It catalyses the reaction a D-aminoacyl-tRNA + H2O = a tRNA + a D-alpha-amino acid + H(+). In terms of biological role, an aminoacyl-tRNA editing enzyme that deacylates mischarged D-aminoacyl-tRNAs. Also deacylates mischarged glycyl-tRNA(Ala), protecting cells against glycine mischarging by AlaRS. Acts via tRNA-based rather than protein-based catalysis; rejects L-amino acids rather than detecting D-amino acids in the active site. By recycling D-aminoacyl-tRNA to D-amino acids and free tRNA molecules, this enzyme counteracts the toxicity associated with the formation of D-aminoacyl-tRNA entities in vivo and helps enforce protein L-homochirality. This is D-aminoacyl-tRNA deacylase from Ligilactobacillus salivarius (strain UCC118) (Lactobacillus salivarius).